The primary structure comprises 181 residues: ADP-ribosylation factor 1 (181 aa).

A lipid anchor (N-myristoyl glycine) is attached at G2. GTP is bound by residues 24 to 31 (GLDAAGKT), 67 to 71 (DVGGQ), and 126 to 129 (NKQD).

This sequence belongs to the small GTPase superfamily. Arf family. Seedling shoots.

It is found in the golgi apparatus. It carries out the reaction GTP + H2O = GDP + phosphate + H(+). Its function is as follows. GTP-binding protein involved in protein trafficking; may modulate vesicle budding and uncoating within the Golgi apparatus. This Oryza sativa subsp. japonica (Rice) protein is ADP-ribosylation factor 1.